The chain runs to 531 residues: Probable bifunctional methylthioribulose-1-phosphate dehydratase/enolase-phosphatase E1 2 (531 aa).

The methylthioribulose-1-phosphate dehydratase stretch occupies residues 1–248; that stretch reads MGVPSEGAVG…AIKLHQLGLD (248 aa). Cys-120 contacts substrate. His-138 and His-140 together coordinate Zn(2+). Glu-163 acts as the Proton donor/acceptor; for methylthioribulose-1-phosphate dehydratase activity in catalysis. Zn(2+) is bound at residue His-213. The enolase-phosphatase E1 stretch occupies residues 292–531; sequence ILLDIEGTTT…FRTIETFLEI (240 aa). Residues Asp-295 and Glu-297 each contribute to the Mg(2+) site. Substrate contacts are provided by residues 430-431 and Lys-464; that span reads SS. A Mg(2+)-binding site is contributed by Asp-490.

In the N-terminal section; belongs to the aldolase class II family. MtnB subfamily. The protein in the C-terminal section; belongs to the HAD-like hydrolase superfamily. MasA/MtnC family. Zn(2+) serves as cofactor. The cofactor is Mg(2+).

It catalyses the reaction 5-(methylsulfanyl)-D-ribulose 1-phosphate = 5-methylsulfanyl-2,3-dioxopentyl phosphate + H2O. The enzyme catalyses 5-methylsulfanyl-2,3-dioxopentyl phosphate + H2O = 1,2-dihydroxy-5-(methylsulfanyl)pent-1-en-3-one + phosphate. It participates in amino-acid biosynthesis; L-methionine biosynthesis via salvage pathway; L-methionine from S-methyl-5-thio-alpha-D-ribose 1-phosphate: step 2/6. It functions in the pathway amino-acid biosynthesis; L-methionine biosynthesis via salvage pathway; L-methionine from S-methyl-5-thio-alpha-D-ribose 1-phosphate: step 3/6. The protein operates within amino-acid biosynthesis; L-methionine biosynthesis via salvage pathway; L-methionine from S-methyl-5-thio-alpha-D-ribose 1-phosphate: step 4/6. The sequence is that of Probable bifunctional methylthioribulose-1-phosphate dehydratase/enolase-phosphatase E1 2 from Vitis vinifera (Grape).